The primary structure comprises 88 residues: Small ribosomal subunit protein bS18 (88 aa).

Belongs to the bacterial ribosomal protein bS18 family. In terms of assembly, part of the 30S ribosomal subunit. Forms a tight heterodimer with protein bS6.

Functionally, binds as a heterodimer with protein bS6 to the central domain of the 16S rRNA, where it helps stabilize the platform of the 30S subunit. This chain is Small ribosomal subunit protein bS18, found in Aliarcobacter butzleri (strain RM4018) (Arcobacter butzleri).